The chain runs to 44 residues: Pandinin-1 (44 aa).

As to expression, expressed by the venom gland.

It localises to the secreted. It is found in the target cell membrane. Its function is as follows. Disrupts cell membranes through formation of pores. Strong antimicrobial activity against Gram-positive bacteria B.subtilis, S.epidermidis, E.faecalis and S.aureus. Less active against Gram-negative bacteria P.aeruginosa and E.coli. Has no antifungal or hemolytic activity. The chain is Pandinin-1 from Pandinus imperator (Emperor scorpion).